Here is a 95-residue protein sequence, read N- to C-terminus: Co-chaperonin GroES (95 aa).

Belongs to the GroES chaperonin family. In terms of assembly, heptamer of 7 subunits arranged in a ring. Interacts with the chaperonin GroEL.

The protein resides in the cytoplasm. Together with the chaperonin GroEL, plays an essential role in assisting protein folding. The GroEL-GroES system forms a nano-cage that allows encapsulation of the non-native substrate proteins and provides a physical environment optimized to promote and accelerate protein folding. GroES binds to the apical surface of the GroEL ring, thereby capping the opening of the GroEL channel. This is Co-chaperonin GroES from Rhizorhabdus wittichii (strain DSM 6014 / CCUG 31198 / JCM 15750 / NBRC 105917 / EY 4224 / RW1) (Sphingomonas wittichii).